The following is a 119-amino-acid chain: Large ribosomal subunit protein bL19 (119 aa).

This sequence belongs to the bacterial ribosomal protein bL19 family.

Its function is as follows. This protein is located at the 30S-50S ribosomal subunit interface and may play a role in the structure and function of the aminoacyl-tRNA binding site. This chain is Large ribosomal subunit protein bL19, found in Leuconostoc citreum (strain KM20).